We begin with the raw amino-acid sequence, 334 residues long: MAFNLRNRNFLKLLDFSTKEIQFLLELSAELKKAKYAGTEQKTLQGKNIALIFEKSSTRTRCAFEVAAFDQGAQVTYIGPSGSQIGHKESMKDTARVLGRMYDGIEYRGFGQSIVEELGTHAGVPVWNGLTDEFHPTQILADFLTMQEHSRGKQLHEMTFAYLGDARNNMGNSLMVGAAKMGMDIRLVAPKAFWPEEHLVATCQDIAKQTGAKITLTENVEEGVKGCDFLYTDVWVSMGEAAEAWDERVALMTPYQINMDVIKQTGNPHVKFMHCLPAFHNDETTVGKEIAEKYGMKGLEVTEDVFESEYSIVFDEAENRMHTIKAIMVATLGS.

Residues 57 to 60 (STRT), glutamine 84, arginine 108, and 135 to 138 (HPTQ) each bind carbamoyl phosphate. L-ornithine contacts are provided by residues asparagine 169, aspartate 233, and 237–238 (SM). Carbamoyl phosphate contacts are provided by residues 275 to 276 (CL) and arginine 320.

Belongs to the aspartate/ornithine carbamoyltransferase superfamily. OTCase family.

The protein localises to the cytoplasm. It carries out the reaction carbamoyl phosphate + L-ornithine = L-citrulline + phosphate + H(+). Its pathway is amino-acid biosynthesis; L-arginine biosynthesis; L-arginine from L-ornithine and carbamoyl phosphate: step 1/3. Reversibly catalyzes the transfer of the carbamoyl group from carbamoyl phosphate (CP) to the N(epsilon) atom of ornithine (ORN) to produce L-citrulline. In Vibrio parahaemolyticus serotype O3:K6 (strain RIMD 2210633), this protein is Ornithine carbamoyltransferase.